The primary structure comprises 390 residues: Imidazolonepropionase (390 aa).

Positions 71 and 73 each coordinate Fe(3+). Residues His71 and His73 each coordinate Zn(2+). 4-imidazolone-5-propanoate contacts are provided by Arg80, Tyr138, and His165. Position 138 (Tyr138) interacts with N-formimidoyl-L-glutamate. His228 lines the Fe(3+) pocket. Residue His228 coordinates Zn(2+). Gln231 lines the 4-imidazolone-5-propanoate pocket. Asp302 is a binding site for Fe(3+). Residue Asp302 coordinates Zn(2+). N-formimidoyl-L-glutamate-binding residues include Asn304 and Gly306. Residue Ser307 coordinates 4-imidazolone-5-propanoate.

The protein belongs to the metallo-dependent hydrolases superfamily. HutI family. Zn(2+) is required as a cofactor. Requires Fe(3+) as cofactor.

It is found in the cytoplasm. It carries out the reaction 4-imidazolone-5-propanoate + H2O = N-formimidoyl-L-glutamate. It participates in amino-acid degradation; L-histidine degradation into L-glutamate; N-formimidoyl-L-glutamate from L-histidine: step 3/3. Its function is as follows. Catalyzes the hydrolytic cleavage of the carbon-nitrogen bond in imidazolone-5-propanoate to yield N-formimidoyl-L-glutamate. It is the third step in the universal histidine degradation pathway. This is Imidazolonepropionase from Streptomyces griseus subsp. griseus (strain JCM 4626 / CBS 651.72 / NBRC 13350 / KCC S-0626 / ISP 5235).